A 298-amino-acid polypeptide reads, in one-letter code: N-acetylmuramic acid 6-phosphate etherase (298 aa).

Residues 55-218 (IHAQVSGGGR…STGLMIKSGK (164 aa)) form the SIS domain. The Proton donor role is filled by Glu-83. Residue Glu-114 is part of the active site.

Belongs to the GCKR-like family. MurNAc-6-P etherase subfamily. In terms of assembly, homodimer.

It catalyses the reaction N-acetyl-D-muramate 6-phosphate + H2O = N-acetyl-D-glucosamine 6-phosphate + (R)-lactate. It functions in the pathway amino-sugar metabolism; 1,6-anhydro-N-acetylmuramate degradation. Its pathway is amino-sugar metabolism; N-acetylmuramate degradation. It participates in cell wall biogenesis; peptidoglycan recycling. In terms of biological role, specifically catalyzes the cleavage of the D-lactyl ether substituent of MurNAc 6-phosphate, producing GlcNAc 6-phosphate and D-lactate. Together with AnmK, is also required for the utilization of anhydro-N-acetylmuramic acid (anhMurNAc) either imported from the medium or derived from its own cell wall murein, and thus plays a role in cell wall recycling. In Shigella flexneri serotype 5b (strain 8401), this protein is N-acetylmuramic acid 6-phosphate etherase.